Here is a 521-residue protein sequence, read N- to C-terminus: Beta-glucosidase 11 (521 aa).

Residues 1 to 23 (MKLLSNSLMFLPLLALALTAVSS) form the signal peptide. A beta-D-glucoside contacts are provided by residues glutamine 45, histidine 144, and 189–190 (NE). Glutamate 190 serves as the catalytic Proton donor. Cysteine 209 and cysteine 217 form a disulfide bridge. Residues asparagine 216 and asparagine 221 are each glycosylated (N-linked (GlcNAc...) asparagine). Residue tyrosine 356 participates in a beta-D-glucoside binding. Asparagine 364 and asparagine 388 each carry an N-linked (GlcNAc...) asparagine glycan. Positions 422, 466, and 482 each coordinate a beta-D-glucoside. Catalysis depends on glutamate 422, which acts as the Nucleophile.

Belongs to the glycosyl hydrolase 1 family.

It carries out the reaction Hydrolysis of terminal, non-reducing beta-D-glucosyl residues with release of beta-D-glucose.. The chain is Beta-glucosidase 11 from Arabidopsis thaliana (Mouse-ear cress).